A 569-amino-acid polypeptide reads, in one-letter code: MSEEKLGQHYLAALNEAFPGVVLDHAWQTKDQLTVTVKVNYLPEVVEFLYYKQGGWLSVLFGNDERKLNGHYAVYYVLSMEKGTKCWITVRVEVDANKPEYPSVTPRVPAAVWGEREVRDMYGLIPVGLPDERRLVLPDDWPDELYPLRKDSMDYRQRPAPTTDAETYEFINELGDKKNNVVPIGPLHVTSDEPGHFRLFVDGENIIDADYRLFYVHRGMEKLAETRMGYNEVTFLSDRVCGICGFAHSTAYTTSVENAMGIQVPERAQMIRAILLEVERLHSHLLNLGLACHFTGFDSGFMQFFRVRETSMKMAEILTGARKTYGLNLIGGIRRDLLKDDMIQTRQLAQQMRREVQELVDVLLSTPNMEQRTVGIGRLDPEIARDFSNVGPMVRASGHARDTRADHPFVGYGLLPMEVHSEQGCDVISRLKVRINEVYTALNMIDYGLDNLPGGPLMVEGFTYIPHRFALGFAEAPRGDDIHWSMTGDNQKLYRWRCRAATYANWPTLRYMLRGNTVSDAPLIIGSLDPCYSCTDRMTVVDVRKKKSKVVPYKELERYSIERKNSPLK.

Positions 538 to 569 (MTVVDVRKKKSKVVPYKELERYSIERKNSPLK) are excised as a propeptide.

It belongs to the complex I 49 kDa subunit family. FHL comprises of a formate dehydrogenase, unidentified electron carriers and a hydrogenase (isoenzyme 3). In this non-energy conserving pathway molecular hydrogen and carbodioxide from formate are released. The cofactor is [4Fe-4S] cluster. Ni(2+) serves as cofactor.

The polypeptide is Formate hydrogenlyase subunit 5 (hycE) (Escherichia coli (strain K12)).